The following is a 299-amino-acid chain: ATP phosphoribosyltransferase (299 aa).

The protein belongs to the ATP phosphoribosyltransferase family. Long subfamily. As to quaternary structure, equilibrium between an active dimeric form, an inactive hexameric form and higher aggregates. Interconversion between the various forms is largely reversible and is influenced by the natural substrates and inhibitors of the enzyme. Mg(2+) is required as a cofactor.

The protein localises to the cytoplasm. It catalyses the reaction 1-(5-phospho-beta-D-ribosyl)-ATP + diphosphate = 5-phospho-alpha-D-ribose 1-diphosphate + ATP. It functions in the pathway amino-acid biosynthesis; L-histidine biosynthesis; L-histidine from 5-phospho-alpha-D-ribose 1-diphosphate: step 1/9. Feedback inhibited by histidine. Its function is as follows. Catalyzes the condensation of ATP and 5-phosphoribose 1-diphosphate to form N'-(5'-phosphoribosyl)-ATP (PR-ATP). Has a crucial role in the pathway because the rate of histidine biosynthesis seems to be controlled primarily by regulation of HisG enzymatic activity. This chain is ATP phosphoribosyltransferase, found in Edwardsiella ictaluri (strain 93-146).